Consider the following 367-residue polypeptide: Glutamate 5-kinase (367 aa).

Position 10 (Lys-10) interacts with ATP. Substrate is bound by residues Ser-50, Asp-137, and Asn-149. ATP-binding positions include 169–170 (TD) and 211–217 (TGGMSTK). The PUA domain occupies 275 to 353 (AGEITVDEGA…QEIDAILGYE (79 aa)).

The protein belongs to the glutamate 5-kinase family.

The protein localises to the cytoplasm. It carries out the reaction L-glutamate + ATP = L-glutamyl 5-phosphate + ADP. The protein operates within amino-acid biosynthesis; L-proline biosynthesis; L-glutamate 5-semialdehyde from L-glutamate: step 1/2. Catalyzes the transfer of a phosphate group to glutamate to form L-glutamate 5-phosphate. The protein is Glutamate 5-kinase of Shigella flexneri.